A 273-amino-acid chain; its full sequence is MGIRKVNPTSAGRRFQTYATFEELSNVEPEKSLLEPLRRSGGRNASGRVTSWHRGGGHKRRYRIIDFKRNKENIPATVASIEYDPNRSSHIALLKYADGEKRYIIAPVGLSVGDTVLTGAEADIKPGNCLRLANMPLGTIIHNVELKPGKGGQLARSAGSSIQLIAKEGTHAILRLPSSEMRMVPISCKATVGQVGNIDHENLSLGKAGRKRWLGKRPHVRGVAMNPVDHPMGGGEGRSSGGRHPCTPWGVPTKGYRTRKSKRSDKLIVHRRK.

The segment at 222 to 273 (GVAMNPVDHPMGGGEGRSSGGRHPCTPWGVPTKGYRTRKSKRSDKLIVHRRK) is disordered. The span at 264–273 (SDKLIVHRRK) shows a compositional bias: basic and acidic residues.

Belongs to the universal ribosomal protein uL2 family. Part of the 50S ribosomal subunit. Forms a bridge to the 30S subunit in the 70S ribosome.

One of the primary rRNA binding proteins. Required for association of the 30S and 50S subunits to form the 70S ribosome, for tRNA binding and peptide bond formation. It has been suggested to have peptidyltransferase activity; this is somewhat controversial. Makes several contacts with the 16S rRNA in the 70S ribosome. The sequence is that of Large ribosomal subunit protein uL2 from Syntrophobacter fumaroxidans (strain DSM 10017 / MPOB).